Reading from the N-terminus, the 248-residue chain is Geranylgeranylglyceryl phosphate synthase (248 aa).

2 residues coordinate Mg(2+): aspartate 25 and serine 50. Sn-glycerol 1-phosphate contacts are provided by residues 170–176, 201–202, and 223–224; these read YLEAGSG, GG, and GT.

The protein belongs to the GGGP/HepGP synthase family. Group II subfamily. The cofactor is Mg(2+).

The protein localises to the cytoplasm. It carries out the reaction sn-glycerol 1-phosphate + (2E,6E,10E)-geranylgeranyl diphosphate = sn-3-O-(geranylgeranyl)glycerol 1-phosphate + diphosphate. Its pathway is membrane lipid metabolism; glycerophospholipid metabolism. In terms of biological role, prenyltransferase that catalyzes the transfer of the geranylgeranyl moiety of geranylgeranyl diphosphate (GGPP) to the C3 hydroxyl of sn-glycerol-1-phosphate (G1P). This reaction is the first ether-bond-formation step in the biosynthesis of archaeal membrane lipids. This chain is Geranylgeranylglyceryl phosphate synthase, found in Methanococcus aeolicus (strain ATCC BAA-1280 / DSM 17508 / OCM 812 / Nankai-3).